Consider the following 493-residue polypeptide: Glycerol kinase (493 aa).

Thr-13 is a binding site for ADP. The ATP site is built by Thr-13, Thr-14, and Ser-15. A sn-glycerol 3-phosphate-binding site is contributed by Thr-13. Arg-17 is a binding site for ADP. Residues Arg-83, Glu-84, Tyr-135, and Asp-244 each contribute to the sn-glycerol 3-phosphate site. Arg-83, Glu-84, Tyr-135, Asp-244, and Gln-245 together coordinate glycerol. Positions 266 and 309 each coordinate ADP. ATP contacts are provided by Thr-266, Gly-309, Gln-313, and Gly-410. ADP-binding residues include Gly-410 and Asn-414.

The protein belongs to the FGGY kinase family.

The enzyme catalyses glycerol + ATP = sn-glycerol 3-phosphate + ADP + H(+). The protein operates within polyol metabolism; glycerol degradation via glycerol kinase pathway; sn-glycerol 3-phosphate from glycerol: step 1/1. Inhibited by fructose 1,6-bisphosphate (FBP). In terms of biological role, key enzyme in the regulation of glycerol uptake and metabolism. Catalyzes the phosphorylation of glycerol to yield sn-glycerol 3-phosphate. This is Glycerol kinase from Shewanella piezotolerans (strain WP3 / JCM 13877).